The sequence spans 259 residues: tRNA (guanine-N(7)-)-methyltransferase (259 aa).

The segment at 1 to 74 (MGHHGQMHAQ…PAEDPDRPGP (74 aa)) is disordered. S-adenosyl-L-methionine contacts are provided by glutamate 91, glutamate 116, asparagine 143, and aspartate 166. Aspartate 166 is an active-site residue. Residues lysine 170, aspartate 202, and 238–241 (TKYE) contribute to the substrate site.

The protein belongs to the class I-like SAM-binding methyltransferase superfamily. TrmB family.

It carries out the reaction guanosine(46) in tRNA + S-adenosyl-L-methionine = N(7)-methylguanosine(46) in tRNA + S-adenosyl-L-homocysteine. It participates in tRNA modification; N(7)-methylguanine-tRNA biosynthesis. Functionally, catalyzes the formation of N(7)-methylguanine at position 46 (m7G46) in tRNA. This chain is tRNA (guanine-N(7)-)-methyltransferase, found in Mycobacterium avium (strain 104).